Consider the following 216-residue polypeptide: Large ribosomal subunit protein uL24m (216 aa).

The transit peptide at 1–9 directs the protein to the mitochondrion; sequence MRLSALLAL. At Ser-24 the chain carries Phosphoserine. The KOW domain maps to 56 to 89; the sequence is LFCGDTVEILEGKDAGKQGKVVQVIRQRNWVVVG.

Belongs to the universal ribosomal protein uL24 family. Component of the mitochondrial large ribosomal subunit (mt-LSU). Mature mammalian 55S mitochondrial ribosomes consist of a small (28S) and a large (39S) subunit. The 28S small subunit contains a 12S ribosomal RNA (12S mt-rRNA) and 30 different proteins. The 39S large subunit contains a 16S rRNA (16S mt-rRNA), a copy of mitochondrial valine transfer RNA (mt-tRNA(Val)), which plays an integral structural role, and 52 different proteins.

Its subcellular location is the mitochondrion. This Homo sapiens (Human) protein is Large ribosomal subunit protein uL24m (MRPL24).